We begin with the raw amino-acid sequence, 156 residues long: CASP-like protein 5C1 (156 aa).

Residues 1–24 (MENRERAGAGAVGSAGSLGLRVEQ) are Cytoplasmic-facing. A helical transmembrane segment spans residues 25–45 (AVFSSASLLFMSVGVEFFSYT). Position 46 (Ala-46) is a topological domain, extracellular. A helical transmembrane segment spans residues 47-67 (FCFLVTIMGLVIPWSCTLAMI). Over 68–81 (DVYSILVGCPLRVP) the chain is Cytoplasmic. The helical transmembrane segment at 82–102 (GVMVIVVIGDWVLAILSLAAA) threads the bilayer. Topologically, residues 103 to 132 (SSSAAVIDLLLQFHGSHCSPRFCGRYQLSA) are extracellular. The helical transmembrane segment at 133-153 (MMAFLSWFLTAASSLFNLWFI) threads the bilayer. Over 154-156 (ASR) the chain is Cytoplasmic.

It belongs to the Casparian strip membrane proteins (CASP) family. In terms of assembly, homodimer and heterodimers.

The protein resides in the cell membrane. The chain is CASP-like protein 5C1 from Oryza sativa subsp. indica (Rice).